The primary structure comprises 247 residues: Proteasome subunit alpha type-7 (247 aa).

Belongs to the peptidase T1A family. As to quaternary structure, the 26S proteasome consists of a 20S proteasome core and two 19S regulatory subunits. The 20S proteasome core is composed of 28 subunits that are arranged in four stacked rings, resulting in a barrel-shaped structure. The two end rings are each formed by seven alpha subunits, and the two central rings are each formed by seven beta subunits. The catalytic chamber with the active sites is on the inside of the barrel.

The protein localises to the cytoplasm. Its subcellular location is the nucleus. Its function is as follows. The proteasome is a multicatalytic proteinase complex which is characterized by its ability to cleave peptides with Arg, Phe, Tyr, Leu, and Glu adjacent to the leaving group at neutral or slightly basic pH. The proteasome has an ATP-dependent proteolytic activity. The protein is Proteasome subunit alpha type-7 (PSA4) of Trypanosoma brucei brucei.